Reading from the N-terminus, the 284-residue chain is MDAIKKKMQMLKLDKENALDRAEQAETDKKAAEERSKQLEDDLVALQKKLKATEDELDKYSEALKDAQEKLELAEKKATDAEGDVASLNRRIQLVEEELDRAQERLATALQKLEEAEKAADESERGMKVIENRALKDEEKMELQEIQLKEAKHIAEEADRKYEEVARKLVIVEGELERTEERAELNEGKCSELEEELKTVTNNMKSLEAQAEKYSAKEDKYEEEIKVLTDKLKEAETRAEFAERSVAKLEKTIDDLEDELYAQKLKYKAISEELDHALNDMTSI.

A disordered region spans residues 1–37; sequence MDAIKKKMQMLKLDKENALDRAEQAETDKKAAEERSK. The stretch at 1–284 forms a coiled coil; it reads MDAIKKKMQM…DHALNDMTSI (284 aa). The segment covering 12-37 has biased composition (basic and acidic residues); the sequence is KLDKENALDRAEQAETDKKAAEERSK.

This sequence belongs to the tropomyosin family. In terms of assembly, homodimer. Heterodimer of an alpha (TPM1, TPM3 or TPM4) and a beta (TPM2) chain.

The protein resides in the cytoplasm. The protein localises to the cytoskeleton. Functionally, binds to actin filaments in muscle and non-muscle cells. Plays a central role, in association with the troponin complex, in the calcium dependent regulation of vertebrate striated muscle contraction. Smooth muscle contraction is regulated by interaction with caldesmon. In non-muscle cells is implicated in stabilizing cytoskeleton actin filaments. The chain is Tropomyosin alpha-1 chain (tpma) from Danio rerio (Zebrafish).